A 621-amino-acid polypeptide reads, in one-letter code: Type 2 DNA topoisomerase 6 subunit B (621 aa).

ATP-binding positions include N48, D80, 101-102 (SR), 111-118 (GQQGIGIS), and K435.

The protein belongs to the TOP6B family. In terms of assembly, homodimer. Heterotetramer of two Top6A and two Top6B chains.

The enzyme catalyses ATP-dependent breakage, passage and rejoining of double-stranded DNA.. Functionally, relaxes both positive and negative superturns and exhibits a strong decatenase activity. The chain is Type 2 DNA topoisomerase 6 subunit B from Methanosarcina acetivorans (strain ATCC 35395 / DSM 2834 / JCM 12185 / C2A).